Reading from the N-terminus, the 140-residue chain is MSSTKAPVPPTQAEIQQIQDQLIKARDAFQVHETELQKLSASRSKLLTQLNENEMVKKEFDLLESEAKIYKLNGPVLFKQTKEEAENTITSRLDIINNNLKTIETNFKDIEKKAMEQRNKIFEYQNKIRSLTAPPPPQAQ.

It belongs to the prefoldin subunit beta family. Heterohexamer of two PFD-alpha type and four PFD-beta type subunits.

In terms of biological role, binds specifically to cytosolic chaperonin (c-CPN) and transfers target proteins to it. Binds to nascent polypeptide chain and promotes folding in an environment in which there are many competing pathways for nonnative proteins. This is Probable prefoldin subunit 6 (pfdn6) from Dictyostelium discoideum (Social amoeba).